The following is a 461-amino-acid chain: Asparagine--tRNA ligase (461 aa).

This sequence belongs to the class-II aminoacyl-tRNA synthetase family. In terms of assembly, homodimer.

The protein localises to the cytoplasm. It catalyses the reaction tRNA(Asn) + L-asparagine + ATP = L-asparaginyl-tRNA(Asn) + AMP + diphosphate + H(+). This is Asparagine--tRNA ligase from Geotalea uraniireducens (strain Rf4) (Geobacter uraniireducens).